The following is a 98-amino-acid chain: MASKASGGSTRNGRDSISKRLGVKRYDGQFVKAGNIIVRQRGTRIYPGKNVGMGSDYTLFALKDGYVYFETRRKKKFVSVLSPEEWEKVMAQKNGKVH.

A compositionally biased stretch (polar residues) spans 1 to 11 (MASKASGGSTR). The interval 1-20 (MASKASGGSTRNGRDSISKR) is disordered.

The protein belongs to the bacterial ribosomal protein bL27 family.

This chain is Large ribosomal subunit protein bL27, found in Aquifex aeolicus (strain VF5).